The chain runs to 719 residues: MDATRAFVKDVKRVVVKVGTAVVTRSDGRLALGRLGSLCEQLKELNSDGYEVILVTSGAVSAGRQRLRFRKLVNSSFADLQKPQVELDGKACAAVGQNGLMALYDTLFSQLDLTAAQLLVTDNDFRDPSFRTQLTETVYQLLDLKVVPVLNENDAVSTRKAPYEDSSGIFWDNDSLAALLALELKADLLILLSDVDGLYNGPPSDPRSKLISTYVKEKHQGEITFGDKSRLGRGGMTAKVKAAVYAAYAGIPVIIASGKATDNIIKVIDGQCVGTLFHKDAHLWVQVKETGVRDMAVAARESSRRLQAVSSEERKKILLDIADALEANEEKILAENEADVAAAQYAGYDRSLVARLAMNPDKISSLAKSIRVLADMEEPIGRILKRTEIADGLILEKTSCPLGVLLIVFESRPDALVQIASLAIRSGNGLLLKGGKEAKRSNAILHKVITSAIPDKVGEKLIGLVTSRDEIPDLLKLDDVIDLVIPRGSNKLVSQIKESTRIPVLGHADGICHVYVDKSANMDMAKRIVLDAKTDYPAACNAMETLLVHKDLAENGGLNDLIVDLRTEGVTMFGGPRIDALQEFNIQATQTFNREYSSPACTVEIVDDVYAAIEHINHHGSAHTDCIIAEDHKVAETFLQLVDSAAVLHNASTRFCDGFRFGLGAEVGISTSRIHARGPVGVEGLLTTRWVLKGSGQVVHGDKGVVYTHKDLPLVAQNS.

The tract at residues 1-293 (MDATRAFVKD…WVQVKETGVR (293 aa)) is glutamate 5-kinase. Residues Ser-57, Asp-154, and Asn-173 each contribute to the substrate site. ATP is bound by residues 193 to 194 (SD) and 233 to 239 (RGGMTAK). The tract at residues 294 to 719 (DMAVAARESS…KDLPLVAQNS (426 aa)) is gamma-glutamyl phosphate reductase.

It in the N-terminal section; belongs to the glutamate 5-kinase family. In the C-terminal section; belongs to the gamma-glutamyl phosphate reductase family. As to expression, expressed at high levels in leaves and is inducible in roots subjected to salt stress.

It carries out the reaction L-glutamate + ATP = L-glutamyl 5-phosphate + ADP. The catalysed reaction is L-glutamate 5-semialdehyde + phosphate + NADP(+) = L-glutamyl 5-phosphate + NADPH + H(+). It functions in the pathway amino-acid biosynthesis; L-proline biosynthesis; L-glutamate 5-semialdehyde from L-glutamate: step 1/2. The protein operates within amino-acid biosynthesis; L-proline biosynthesis; L-glutamate 5-semialdehyde from L-glutamate: step 2/2. With respect to regulation, feedback regulated by proline. Its function is as follows. P5CS plays a key role in proline biosynthesis, leading to osmoregulation in plants. In Mesembryanthemum crystallinum (Common ice plant), this protein is Delta-1-pyrroline-5-carboxylate synthase (P5CS).